Consider the following 225-residue polypeptide: Riboflavin kinase (225 aa).

The segment at 1 to 89 is unknown; it reads MPDIKYLKKL…SRIFSPDLDI (89 aa). A riboflavin kinase region spans residues 90 to 225; it reads LELEGKVLKG…LKKQGTENQK (136 aa). Residue 99 to 104 coordinates CDP; it reads GLGEGQ. Residues Thr-128 and Asn-130 each contribute to the Mg(2+) site. Positions 185 and 193 each coordinate FMN. Position 198–201 (198–201) interacts with CDP; that stretch reads IKLR.

This sequence belongs to the archaeal riboflavin kinase family. Mg(2+) serves as cofactor.

It carries out the reaction riboflavin + CTP = CDP + FMN + H(+). It participates in cofactor biosynthesis; FMN biosynthesis; FMN from riboflavin (CTP route): step 1/1. Catalyzes the CTP-dependent phosphorylation of riboflavin (vitamin B2) to form flavin mononucleotide (FMN). The protein is Riboflavin kinase (ribK) of Methanosarcina barkeri (strain Fusaro / DSM 804).